Reading from the N-terminus, the 624-residue chain is Ceramide transfer protein (624 aa).

Over residues 1 to 11 (MSDNQSWNSSG) the composition is skewed to polar residues. The disordered stretch occupies residues 1–24 (MSDNQSWNSSGSEEDPETESGPPV). A PH domain is found at 23–117 (PVERCGVLSK…WVDAIEQHKT (95 aa)). Phosphoserine is present on residues S126, S132, and S135. The interval 202–221 (DDEDDFPTTRSDGDFLHNTN) is disordered. Positions 263–303 (IELMVKREESWQKRHDREVEKRRRVEEAYKNVMEELKKKPR) form a coiled coil. S315 is modified (phosphoserine). The FFAT motif lies at 321–327 (EFFDAVE). Y372 is subject to Phosphotyrosine. S373, S377, and S380 each carry phosphoserine. An START domain is found at 389 to 618 (DVHRFSSQVE…FTSYVQEKTA (230 aa)). Residues E472, Q493, N530, and Y579 each contribute to the an N-acylsphing-4-enine site.

As to quaternary structure, interacts with VAPA and VAPB. Interaction with VAPB is less efficient than with VAPA. Interacts (via FFAT motif) with MOSPD2 (via MSP domain). Phosphorylation on Ser-132 decreases the affinity toward phosphatidylinositol 4-phosphate at Golgi membranes and reduces ceramide transfer activity. Inactivated by hyperphosphorylation of serine residues by CSNK1G2/CK1 that triggers dissociation from the Golgi complex, thus down-regulating ER-to-Golgi transport of ceramide and sphingomyelin synthesis.

The protein resides in the cytoplasm. It is found in the golgi apparatus. Its subcellular location is the endoplasmic reticulum. It catalyses the reaction N-hexadecanoylsphing-4-enine(in) = N-hexadecanoylsphing-4-enine(out). Functionally, shelters ceramides and diacylglycerol lipids inside its START domain and mediates the intracellular trafficking of ceramides and diacylglycerol lipids in a non-vesicular manner. The chain is Ceramide transfer protein (Cert1) from Mus musculus (Mouse).